A 250-amino-acid polypeptide reads, in one-letter code: Histone H1.2 (250 aa).

Residues 1-11 are compositionally biased toward polar residues; it reads MSDSAVATSAS. 2 disordered regions span residues 1–53 and 101–250; these read MSDS…QMVD and KLIQ…ATKK. A compositionally biased stretch (low complexity) spans 27 to 42; sequence KKAAATPKSKKSTAAP. An H15 domain is found at 44 to 118; the sequence is SHPPTQQMVD…GASGSFKLSR (75 aa). The span at 120–133 shows a compositional bias: basic and acidic residues; that stretch reads AKKDPKPKASAVEK. The span at 151–161 shows a compositional bias: low complexity; that stretch reads STSTTKKAAGA. Residues 174–191 show a composition bias toward basic and acidic residues; that stretch reads KSVEKKRADKAKAKDAKK. The span at 192-211 shows a compositional bias: low complexity; sequence TGTIKAKPTTAKAKSSATKP. Basic residues-rich tracts occupy residues 212 to 225 and 235 to 250; these read KTPKPKTKSAKPKK and TAVKKPKAKTASATKK.

This sequence belongs to the histone H1/H5 family.

It is found in the nucleus. The protein localises to the chromosome. Functionally, histones H1 are necessary for the condensation of nucleosome chains into higher-order structures. This Drosophila virilis (Fruit fly) protein is Histone H1.2 (His1.2).